A 976-amino-acid polypeptide reads, in one-letter code: Mast/stem cell growth factor receptor Kit (976 aa).

The signal sequence occupies residues 1 to 25 (MRGARGAWDFLCVLLLLLRVQTGSS). The Extracellular portion of the chain corresponds to 26-524 (QPSVSPGEPS…QIHPHTLFTP (499 aa)). 5 Ig-like C2-type domains span residues 27–112 (PSVS…VFVR), 121–205 (DRSL…LKVR), 212–308 (PVVS…LEVV), 317–410 (PMIN…VYVN), and 413–507 (PEIL…FNFA). Residues cysteine 58 and cysteine 97 are joined by a disulfide bond. N-linked (GlcNAc...) asparagine glycosylation is found at asparagine 130 and asparagine 145. Intrachain disulfides connect cysteine 136/cysteine 186, cysteine 151/cysteine 183, and cysteine 233/cysteine 290. Residues asparagine 283, asparagine 293, asparagine 300, asparagine 320, asparagine 352, asparagine 367, asparagine 463, and asparagine 486 are each glycosylated (N-linked (GlcNAc...) asparagine). A disulfide bridge connects residues cysteine 428 and cysteine 491. A helical transmembrane segment spans residues 525-545 (LLIGFVIVAGMMCIIVMILTY). Topologically, residues 546–976 (KYLQKPMYEV…SQPLLVHDDV (431 aa)) are cytoplasmic. 4 positions are modified to phosphotyrosine; by autocatalysis: tyrosine 547, tyrosine 553, tyrosine 568, and tyrosine 570. Tyrosine 568 lines the Mg(2+) pocket. An important for interaction with phosphotyrosine-binding proteins region spans residues 568 to 570 (YVY). Residues 589 to 937 (LSFGKTLGAG…ISESTNHIYS (349 aa)) enclose the Protein kinase domain. ATP is bound by residues 596 to 603 (GAGAFGKV), lysine 623, and 671 to 677 (EYCCYGD). Phosphotyrosine; by autocatalysis occurs at positions 703, 721, and 730. A phosphoserine; by PKC/PRKCA mark is found at serine 741 and serine 746. Aspartate 792 functions as the Proton acceptor in the catalytic mechanism. Arginine 796 provides a ligand contact to ATP. Residues asparagine 797 and aspartate 810 each coordinate Mg(2+). Serine 821 is subject to Phosphoserine. The residue at position 823 (tyrosine 823) is a Phosphotyrosine; by autocatalysis. Serine 891 carries the post-translational modification Phosphoserine. Phosphotyrosine; by autocatalysis is present on residues tyrosine 900 and tyrosine 936. Position 959 is a phosphoserine (serine 959).

This sequence belongs to the protein kinase superfamily. Tyr protein kinase family. CSF-1/PDGF receptor subfamily. In terms of assembly, monomer in the absence of bound KITLG/SCF. Homodimer in the presence of bound KITLG/SCF, forming a heterotetramer with two KITLG/SCF molecules. Interacts (via phosphorylated tyrosine residues) with the adapter proteins GRB2 and GRB7 (via SH2 domain), and SH2B2/APS. Interacts (via C-terminus) with MPDZ (via the tenth PDZ domain). Interacts (via phosphorylated tyrosine residues) with PIK3R1 and PIK3 catalytic subunit. Interacts (via phosphorylated tyrosine) with CRK (isoform Crk-II), FYN, SHC1 and MATK/CHK (via SH2 domain). Interacts with LYN and FES/FPS. Interacts (via phosphorylated tyrosine residues) with the protein phosphatases PTPN6/SHP-1 (via SH2 domain), PTPN11/SHP-2 (via SH2 domain) and PTPRU. Interacts with PLCG1. Interacts with DOK1 and TEC. Interacts (KITLG/SCF-bound) with IL1RL1. Interacts with IL1RAP (independent of stimulation with KITLG/SCF). A mast cell-specific KITLG/SCF-induced interleukin-33 signaling complex contains IL1RL1, IL1RAP, KIT and MYD88. Post-translationally, ubiquitinated by SOCS6. KIT is rapidly ubiquitinated after autophosphorylation induced by KITLG/SCF binding, leading to internalization and degradation. In terms of processing, autophosphorylated on tyrosine residues. KITLG/SCF binding enhances autophosphorylation. Isoform 1 shows low levels of tyrosine phosphorylation in the absence of added KITLG/SCF (in vitro). Kinase activity is down-regulated by phosphorylation on serine residues by protein kinase C family members. Phosphorylation at Tyr-568 is required for interaction with PTPN11/SHP-2, CRK (isoform Crk-II) and members of the SRC tyrosine-protein kinase family. Phosphorylation at Tyr-570 is required for interaction with PTPN6/SHP-1. Phosphorylation at Tyr-703, Tyr-823 and Tyr-936 is important for interaction with GRB2. Phosphorylation at Tyr-721 is important for interaction with PIK3R1. Phosphorylation at Tyr-823 and Tyr-936 is important for interaction with GRB7. As to expression, in testis, detected in spermatogonia in the basal layer and in interstitial Leydig cells but not in Sertoli cells or spermatocytes inside the seminiferous tubules (at protein level). Expression is maintained in ejaculated spermatozoa (at protein level).

It is found in the cell membrane. Its subcellular location is the cytoplasm. It carries out the reaction L-tyrosyl-[protein] + ATP = O-phospho-L-tyrosyl-[protein] + ADP + H(+). Present in an inactive conformation in the absence of bound ligand. KITLG/SCF binding leads to dimerization and activation by autophosphorylation on tyrosine residues. Activity is down-regulated by PRKCA-mediated phosphorylation on serine residues. Inhibited by imatinib/STI-571 (Gleevec) and sunitinib; these compounds maintain the kinase in an inactive conformation. Tyrosine-protein kinase that acts as a cell-surface receptor for the cytokine KITLG/SCF and plays an essential role in the regulation of cell survival and proliferation, hematopoiesis, stem cell maintenance, gametogenesis, mast cell development, migration and function, and in melanogenesis. In response to KITLG/SCF binding, KIT can activate several signaling pathways. Phosphorylates PIK3R1, PLCG1, SH2B2/APS and CBL. Activates the AKT1 signaling pathway by phosphorylation of PIK3R1, the regulatory subunit of phosphatidylinositol 3-kinase. Activated KIT also transmits signals via GRB2 and activation of RAS, RAF1 and the MAP kinases MAPK1/ERK2 and/or MAPK3/ERK1. Promotes activation of STAT family members STAT1, STAT3, STAT5A and STAT5B. Activation of PLCG1 leads to the production of the cellular signaling molecules diacylglycerol and inositol 1,4,5-trisphosphate. KIT signaling is modulated by protein phosphatases, and by rapid internalization and degradation of the receptor. Activated KIT promotes phosphorylation of the protein phosphatases PTPN6/SHP-1 and PTPRU, and of the transcription factors STAT1, STAT3, STAT5A and STAT5B. Promotes phosphorylation of PIK3R1, CBL, CRK (isoform Crk-II), LYN, MAPK1/ERK2 and/or MAPK3/ERK1, PLCG1, SRC and SHC1. This is Mast/stem cell growth factor receptor Kit (KIT) from Homo sapiens (Human).